The chain runs to 460 residues: Proton extrusion protein PxcA (460 aa).

2 disordered regions span residues phenylalanine 82–aspartate 128 and serine 143–asparagine 190. Positions glutamine 90 to alanine 102 are enriched in polar residues. The span at alanine 107–serine 120 shows a compositional bias: low complexity. A compositionally biased stretch (polar residues) spans lysine 151–proline 163. The segment covering glutamine 171–valine 184 has biased composition (low complexity). The next 4 membrane-spanning stretches (helical) occupy residues phenylalanine 242 to phenylalanine 262, glycine 337 to valine 357, isoleucine 373 to valine 393, and phenylalanine 420 to isoleucine 440.

It belongs to the CemA family.

It is found in the cell inner membrane. Functionally, required for H(+) efflux immediately after light irradiation to form a rapid H(+) concentration gradient across the thylakoid membranes. Together with PxcL, contributes to transient H(+) uptake following dark to light transition. In Synechococcus sp. (strain JA-2-3B'a(2-13)) (Cyanobacteria bacterium Yellowstone B-Prime), this protein is Proton extrusion protein PxcA.